Consider the following 139-residue polypeptide: Ribonuclease P/MRP protein subunit POP5 (139 aa).

This sequence belongs to the eukaryotic/archaeal RNase P protein component 2 family.

Its subcellular location is the nucleus. The catalysed reaction is Endonucleolytic cleavage of RNA, removing 5'-extranucleotides from tRNA precursor.. Its function is as follows. Component of ribonuclease P, a protein complex that generates mature tRNA molecules by cleaving their 5'-ends. Also a component of RNase MRP, which cleaves pre-rRNA sequences. This Schizosaccharomyces pombe (strain 972 / ATCC 24843) (Fission yeast) protein is Ribonuclease P/MRP protein subunit POP5.